The primary structure comprises 246 residues: Fasciclin-like arabinogalactan protein 11 (246 aa).

Positions 1-24 are cleaved as a signal peptide; it reads MATSRTFIFSNLFIFFLVIATTYG. The FAS1 domain occupies 34 to 179; it reads PTNITAILEK…LAVYQVDQVL (146 aa). N-linked (GlcNAc...) asparagine glycans are attached at residues Asn-36, Asn-68, Asn-141, and Asn-150. Residues 193–222 are disordered; it reads PAPEKGGSVSKGSASGGDDGGDSTDSSDAE. Ser-219 is lipidated: GPI-anchor amidated serine. Positions 220–246 are cleaved as a propeptide — removed in mature form; sequence DAERTGFGFGIRITTVAAIAASSSLWI.

Belongs to the fasciclin-like AGP family. In terms of tissue distribution, expressed in the sclerenchyma cells of inflorescence stems and siliques.

It localises to the cell membrane. Its function is as follows. May be a cell surface adhesion protein. The chain is Fasciclin-like arabinogalactan protein 11 (FLA11) from Arabidopsis thaliana (Mouse-ear cress).